The chain runs to 430 residues: UDP-N-acetylglucosamine 1-carboxyvinyltransferase (430 aa).

Phosphoenolpyruvate is bound at residue 22-23 (KN). Arg-102 serves as a coordination point for UDP-N-acetyl-alpha-D-glucosamine. The active-site Proton donor is the Cys-126. The residue at position 126 (Cys-126) is a 2-(S-cysteinyl)pyruvic acid O-phosphothioketal. UDP-N-acetyl-alpha-D-glucosamine is bound by residues 131–135 (RPVDL), 172–175 (KVSV), Asp-317, and Ile-339.

Belongs to the EPSP synthase family. MurA subfamily.

The protein localises to the cytoplasm. It carries out the reaction phosphoenolpyruvate + UDP-N-acetyl-alpha-D-glucosamine = UDP-N-acetyl-3-O-(1-carboxyvinyl)-alpha-D-glucosamine + phosphate. It participates in cell wall biogenesis; peptidoglycan biosynthesis. Its function is as follows. Cell wall formation. Adds enolpyruvyl to UDP-N-acetylglucosamine. This chain is UDP-N-acetylglucosamine 1-carboxyvinyltransferase, found in Sinorhizobium fredii (strain NBRC 101917 / NGR234).